Consider the following 416-residue polypeptide: 46 kDa surface antigen (416 aa).

The first 27 residues, 1–27 (MLRKKFLYSSAIYATSLASIIAFVAAG), serve as a signal peptide directing secretion. Cys-28 is lipidated: N-palmitoyl cysteine. Residue Cys-28 is the site of S-diacylglycerol cysteine attachment.

It localises to the cell membrane. The chain is 46 kDa surface antigen (p46) from Mesomycoplasma hyopneumoniae (strain 232) (Mycoplasma hyopneumoniae).